Here is a 471-residue protein sequence, read N- to C-terminus: Uronate isomerase (471 aa).

It belongs to the metallo-dependent hydrolases superfamily. Uronate isomerase family.

It catalyses the reaction D-glucuronate = D-fructuronate. The enzyme catalyses aldehydo-D-galacturonate = keto-D-tagaturonate. It functions in the pathway carbohydrate metabolism; pentose and glucuronate interconversion. The polypeptide is Uronate isomerase (Cellvibrio japonicus (strain Ueda107) (Pseudomonas fluorescens subsp. cellulosa)).